The following is a 308-amino-acid chain: Ornithine carbamoyltransferase (308 aa).

Carbamoyl phosphate-binding positions include 56 to 59 (STRT), Gln-83, Arg-107, and 134 to 137 (HPCQ). L-ornithine contacts are provided by residues Asn-165, Asp-225, and 229 to 230 (SM). Residues 264–265 (CL) and Arg-292 contribute to the carbamoyl phosphate site.

Belongs to the aspartate/ornithine carbamoyltransferase superfamily. OTCase family.

It is found in the cytoplasm. The catalysed reaction is carbamoyl phosphate + L-ornithine = L-citrulline + phosphate + H(+). It functions in the pathway amino-acid biosynthesis; L-arginine biosynthesis; L-arginine from L-ornithine and carbamoyl phosphate: step 1/3. Reversibly catalyzes the transfer of the carbamoyl group from carbamoyl phosphate (CP) to the N(epsilon) atom of ornithine (ORN) to produce L-citrulline. This is Ornithine carbamoyltransferase from Nitrobacter winogradskyi (strain ATCC 25391 / DSM 10237 / CIP 104748 / NCIMB 11846 / Nb-255).